The chain runs to 231 residues: MTVLTDKIAVVTGAGSGIGEAIATLLHEEGAKVVLAGRNKDKLQNVANQLAQDSVKVVPTDVTNKEEVDELMKIAQQTFGGLDIVINSAGQMLSSKITDYQVDEWDSMIDVNIKGTLYTAQAALPTMLEQSSGHLINIASISGFEVTKSSTIYSATKAAVHTITQGLEKELAKTGVKVTSISPGMVDTAITAAYNPSDRKKLDPQDIAEAVLYALTQPKHVNVNEITVRPV.

Residue 10-34 (VVTGAGSGIGEAIATLLHEEGAKVV) participates in NADP(+) binding. A substrate-binding site is contributed by S140. Y153 (proton acceptor) is an active-site residue.

This sequence belongs to the short-chain dehydrogenases/reductases (SDR) family.

This is an uncharacterized protein from Staphylococcus aureus (strain N315).